A 309-amino-acid polypeptide reads, in one-letter code: MPIRVPDELPAVNFLREENVFVMTTSRASGQEIRPLKVLILNLMPKKIETENQFLRLLSNSPLQVDIQLLRIDSRESRNTPAEHLNNFYCNFEDIQDQNFDGLIVTGAPLGLVEFNDVAYWPQIKQVLEWSKDHVTSTLFVCWAVQAALNILYGIPKQTRTDKLSGVYEHHILHPHALLTRGFDDSFLAPHSRYADFPAALIRDYTDLEILAETEEGDAYLFASKDKRIAFVTGHPEYDAQTLAQEFFRDVEAGLDPDVPYNYFPHNDPQNTPRASWRSHGNLLFTNWLNYYVYQITPYDLRHMNPTLD.

The Acyl-thioester intermediate role is filled by C142. K163 and S192 together coordinate substrate. The active-site Proton acceptor is H235. The active site involves E237. R249 is a substrate binding site.

Belongs to the MetA family. Homodimer.

It is found in the cytoplasm. The catalysed reaction is L-homoserine + succinyl-CoA = O-succinyl-L-homoserine + CoA. It functions in the pathway amino-acid biosynthesis; L-methionine biosynthesis via de novo pathway; O-succinyl-L-homoserine from L-homoserine: step 1/1. In terms of biological role, transfers a succinyl group from succinyl-CoA to L-homoserine, forming succinyl-L-homoserine. This Escherichia coli (strain ATCC 8739 / DSM 1576 / NBRC 3972 / NCIMB 8545 / WDCM 00012 / Crooks) protein is Homoserine O-succinyltransferase.